A 71-amino-acid polypeptide reads, in one-letter code: UPF0346 protein BcerKBAB4_2120 (71 aa).

It belongs to the UPF0346 family.

The sequence is that of UPF0346 protein BcerKBAB4_2120 from Bacillus mycoides (strain KBAB4) (Bacillus weihenstephanensis).